A 277-amino-acid polypeptide reads, in one-letter code: Energy-coupling factor transporter ATP-binding protein EcfA1 (277 aa).

One can recognise an ABC transporter domain in the interval 4-238 (IETKNLNYSY…SELLSKNDLK (235 aa)). 38-45 (GKNGSGKS) lines the ATP pocket.

This sequence belongs to the ABC transporter superfamily. Energy-coupling factor EcfA family. Forms a stable energy-coupling factor (ECF) transporter complex composed of 2 membrane-embedded substrate-binding proteins (S component), 2 ATP-binding proteins (A component) and 2 transmembrane proteins (T component).

The protein resides in the cell membrane. Functionally, ATP-binding (A) component of a common energy-coupling factor (ECF) ABC-transporter complex. Unlike classic ABC transporters this ECF transporter provides the energy necessary to transport a number of different substrates. The sequence is that of Energy-coupling factor transporter ATP-binding protein EcfA1 from Oenococcus oeni (strain ATCC BAA-331 / PSU-1).